The chain runs to 155 residues: MMRGASKRSISSAAVLLIKKNKLPPRPKFTPEMEAQCTEKFLHGGRGPGGQKINKCNSKVQLRHEPTGIVVECQETRSREQNRKLARLKLARELAASYDTMPSREEALLQWHRQQKRSQRRRSVAKYEQREEAARVEKEEREARDREMVRELFRR.

Residues 1-17 (MMRGASKRSISSAAVLL) constitute a mitochondrion transit peptide. The interval 111–155 (WHRQQKRSQRRRSVAKYEQREEAARVEKEEREARDREMVRELFRR) is disordered. Basic residues predominate over residues 113–124 (RQQKRSQRRRSV). Residues 125–155 (AKYEQREEAARVEKEEREARDREMVRELFRR) are compositionally biased toward basic and acidic residues.

The protein belongs to the prokaryotic/mitochondrial release factor family.

It is found in the mitochondrion. This is an uncharacterized protein from Saccharomyces cerevisiae (strain ATCC 204508 / S288c) (Baker's yeast).